Reading from the N-terminus, the 318-residue chain is D-alanine--D-alanine ligase (318 aa).

Positions Lys116–Ala311 constitute an ATP-grasp domain. An ATP-binding site is contributed by Ser142 to Thr197. 3 residues coordinate Mg(2+): Asp265, Glu278, and Asn280.

It belongs to the D-alanine--D-alanine ligase family. It depends on Mg(2+) as a cofactor. The cofactor is Mn(2+).

It is found in the cytoplasm. It carries out the reaction 2 D-alanine + ATP = D-alanyl-D-alanine + ADP + phosphate + H(+). Its pathway is cell wall biogenesis; peptidoglycan biosynthesis. Its function is as follows. Cell wall formation. This Pseudomonas entomophila (strain L48) protein is D-alanine--D-alanine ligase.